We begin with the raw amino-acid sequence, 708 residues long: GID complex associated protein 12 (708 aa).

Residues 381 to 396 (SSRRNSSFSTASSEPR) are compositionally biased toward low complexity. The segment at 381-403 (SSRRNSSFSTASSEPRPLSRRRR) is disordered.

As to quaternary structure, interacts with core components of the GID/CTLH ubiquitin ligase complex. GID12 binds both the substrate receptor GID4 and the tip of GID5 in the scaffolding module, sealing GID4 onto the scaffold.

Functionally, regulator of the GID E3 ligase complex. Modulates both assembly of the substrate receptor GID4 into the GID E3 ligase complex and its activity toward its substrates. GID12-binding remodels the N-degron binding pocket in the GID(SR4) complex, and could limit substrate accessibility of a bulky substrate to a ubiquitynation active site, thereby stabilizing gluconeogenic enzyme substrates. Involved in actin patch formation. The protein is GID complex associated protein 12 of Saccharomyces cerevisiae (strain ATCC 204508 / S288c) (Baker's yeast).